The primary structure comprises 416 residues: Thioredoxin domain-containing protein 5 homolog (416 aa).

Positions 1–25 (MLTRSILSVAVCGLLLSPLLPITRA) are cleaved as a signal peptide. Thioredoxin domains are found at residues 26 to 145 (SQEE…KELS), 150 to 272 (ADLG…KMVG), and 293 to 412 (AGEE…KFLG). Cystine bridges form between C65–C68, C194–C197, and C331–C334. The Prevents secretion from ER motif lies at 413–416 (HDEL).

This sequence belongs to the protein disulfide isomerase family.

Its subcellular location is the endoplasmic reticulum. The protein localises to the cell surface. In terms of biological role, possesses thioredoxin activity. Acts as a ligand for Drpr and is required for the phagocytosis of apoptotic cells. Binds to the extracellular region of Drpr and augments Drpr tyrosine phosphorylation. This chain is Thioredoxin domain-containing protein 5 homolog, found in Drosophila melanogaster (Fruit fly).